The chain runs to 2280 residues: Acetyl-CoA carboxylase (2280 aa).

The region spanning 68–577 (VITSILIANN…TTGWLDRLIA (510 aa)) is the Biotin carboxylation domain. The ATP-grasp domain maps to 226–418 (ETNIVTVDDD…LPAAQLQVAM (193 aa)). An ATP-binding site is contributed by 266–271 (GGGGKG). Glutamate 375, glutamate 389, and asparagine 391 together coordinate Mn(2+). Arginine 393 is a catalytic residue. The 75-residue stretch at 704-778 (LEQENDPTQL…DAGDILGILT (75 aa)) folds into the Biotinyl-binding domain. Lysine 745 bears the N6-biotinyllysine mark. Phosphoserine occurs at positions 1179 and 1181. In terms of domain architecture, CoA carboxyltransferase N-terminal spans 1524-1863 (PYPTKEWLQP…KRNNPVPISP (340 aa)). Residues 1524-2181 (PYPTKEWLQP…EHYALQKITQ (658 aa)) form a carboxyltransferase region. Arginine 1772, lysine 2074, and arginine 2076 together coordinate CoA. Positions 1867 to 2181 (TWDRDVEFYP…EHYALQKITQ (315 aa)) constitute a CoA carboxyltransferase C-terminal domain.

In terms of assembly, interacts with sad1. Requires biotin as cofactor. The cofactor is Mn(2+).

It is found in the cytoplasm. The catalysed reaction is hydrogencarbonate + acetyl-CoA + ATP = malonyl-CoA + ADP + phosphate + H(+). It catalyses the reaction N(6)-biotinyl-L-lysyl-[protein] + hydrogencarbonate + ATP = N(6)-carboxybiotinyl-L-lysyl-[protein] + ADP + phosphate + H(+). It functions in the pathway lipid metabolism; malonyl-CoA biosynthesis; malonyl-CoA from acetyl-CoA: step 1/1. Its activity is regulated as follows. By phosphorylation. Its function is as follows. Carries out three functions: biotin carboxyl carrier protein, biotin carboxylase and carboxyltransferase. The polypeptide is Acetyl-CoA carboxylase (cut6) (Schizosaccharomyces pombe (strain 972 / ATCC 24843) (Fission yeast)).